A 307-amino-acid chain; its full sequence is Urease accessory protein UreD (307 aa).

Belongs to the UreD family. As to quaternary structure, ureD, UreF and UreG form a complex that acts as a GTP-hydrolysis-dependent molecular chaperone, activating the urease apoprotein by helping to assemble the nickel containing metallocenter of UreC. The UreE protein probably delivers the nickel.

It is found in the cytoplasm. Functionally, required for maturation of urease via the functional incorporation of the urease nickel metallocenter. This Prochlorococcus marinus (strain NATL2A) protein is Urease accessory protein UreD.